We begin with the raw amino-acid sequence, 204 residues long: MSDLVAKTAIDRRLADIVTPVIEGMGFELVRLRLMSGKTRTLQIMADRPDGGIVVDECAEISTAVSAALDVEDPIEENYTLEVSSPGIDRPLTRLKDFDVWTGYEARIETTELIDGRRRFKGELAGTEGDEVLITIEDGRDGYVTIGLKFDWLADAKLILTEELIAEMLRQKKASGNFDESQFDEIEESEGEEADEAEQPPTKH.

The interval 176 to 204 (GNFDESQFDEIEESEGEEADEAEQPPTKH) is disordered. Residues 181-198 (SQFDEIEESEGEEADEAE) are compositionally biased toward acidic residues.

It belongs to the RimP family.

It is found in the cytoplasm. Functionally, required for maturation of 30S ribosomal subunits. The protein is Ribosome maturation factor RimP of Cereibacter sphaeroides (strain KD131 / KCTC 12085) (Rhodobacter sphaeroides).